The chain runs to 59 residues: Large ribosomal subunit protein uL30 (59 aa).

It belongs to the universal ribosomal protein uL30 family. Part of the 50S ribosomal subunit.

The protein is Large ribosomal subunit protein uL30 of Psychrobacter sp. (strain PRwf-1).